We begin with the raw amino-acid sequence, 247 residues long: 2,3-bisphosphoglycerate-dependent phosphoglycerate mutase (247 aa).

Residues 8 to 15 (RHGESQWN), 21 to 22 (TG), arginine 60, 87 to 90 (ERHY), lysine 98, 114 to 115 (RR), and 183 to 184 (GN) each bind substrate. Residue histidine 9 is the Tele-phosphohistidine intermediate of the active site. The Proton donor/acceptor role is filled by glutamate 87.

The protein belongs to the phosphoglycerate mutase family. BPG-dependent PGAM subfamily.

The enzyme catalyses (2R)-2-phosphoglycerate = (2R)-3-phosphoglycerate. It functions in the pathway carbohydrate degradation; glycolysis; pyruvate from D-glyceraldehyde 3-phosphate: step 3/5. In terms of biological role, catalyzes the interconversion of 2-phosphoglycerate and 3-phosphoglycerate. The protein is 2,3-bisphosphoglycerate-dependent phosphoglycerate mutase of Chlorobaculum parvum (strain DSM 263 / NCIMB 8327) (Chlorobium vibrioforme subsp. thiosulfatophilum).